Reading from the N-terminus, the 369-residue chain is RAB6-interacting golgin (369 aa).

Positions Met-1–Lys-128 are disordered. The segment covering Glu-11–Arg-27 has biased composition (basic and acidic residues). 2 stretches are compositionally biased toward polar residues: residues Glu-46 to Leu-61 and Ser-82 to Ser-93. A compositionally biased stretch (basic and acidic residues) spans Gln-106–Asn-120. The stretch at Arg-145 to Glu-297 forms a coiled coil. The interval Ile-188–Thr-369 is necessary for interaction with RCHY1. The tract at residues Val-334 to Thr-369 is disordered. Over residues Cys-342 to Asn-361 the composition is skewed to polar residues.

It belongs to the GORAB family. As to quaternary structure, interacts with SCYL1. Interacts with RCHY1 and RAB6A/RAB6.

It is found in the cytoplasm. The protein resides in the golgi apparatus. The polypeptide is RAB6-interacting golgin (GORAB) (Homo sapiens (Human)).